A 1039-amino-acid polypeptide reads, in one-letter code: 3',5'-cyclic-AMP phosphodiesterase 4 (1039 aa).

The signal sequence occupies residues 1-29; that stretch reads MFNNNNNDKINNTMMSNNPSGQIINLESI. Residues asparagine 11, asparagine 34, and asparagine 37 are each glycosylated (N-linked (GlcNAc...) asparagine). Residues 30–201 are Extracellular-facing; that stretch reads DCNSNLSNTT…KKKVNAESLR (172 aa). Disordered regions lie at residues 40–63 and 116–181; these read SIKD…NNIN and IIPN…NNSI. Residues 45–63 show a composition bias toward low complexity; the sequence is NNNNNNNNNNNNNINNNIN. Asparagine 119, asparagine 124, asparagine 131, asparagine 167, and asparagine 178 each carry an N-linked (GlcNAc...) asparagine glycan. The chain crosses the membrane as a helical span at residues 202-222; it reads GPIIFQNFILYTFFLIVIGTA. Residues 223 to 226 are Cytoplasmic-facing; it reads EGTS. A helical transmembrane segment spans residues 227-247; the sequence is WAPEIRVANFVPYCVMCVVLL. At 248 to 256 the chain is on the extracellular side; that stretch reads EFNRLHKKP. The helical transmembrane segment at 257–277 threads the bilayer; sequence LLRIIFPLYTSNIPFAYMCIF. Residues 278-283 lie on the Cytoplasmic side of the membrane; that stretch reads SREARK. A helical membrane pass occupies residues 284-304; the sequence is YVLISLLFFASCLCIFLQSGI. The Extracellular portion of the chain corresponds to 305–310; that stretch reads PDLRKH. The chain crosses the membrane as a helical span at residues 311-331; sequence IVIFCIIFMINYGCCILFMDW. Residues 332 to 356 lie on the Cytoplasmic side of the membrane; sequence FYIDTTGTKPYRGRILATKIHWGEE. Residues 357–377 form a helical membrane-spanning segment; that stretch reads ATILVSMALLGCIFIVLEKFI. At 378–1039 the chain is on the extracellular side; it reads KSYARCVAEQ…LTQSNYLIVV (662 aa). Positions 384–414 form a coiled coil; the sequence is VAEQHYQIQCLQKEKEKLQTEINISLKKLDL. N-linked (GlcNAc...) asparagine glycans are attached at residues asparagine 406, asparagine 430, asparagine 500, and asparagine 515. A PDEase domain is found at 533-973; the sequence is PEITDQGIQE…QQLQQQQQQQ (441 aa). Catalysis depends on histidine 609, which acts as the Proton donor. A divalent metal cation contacts are provided by histidine 613, histidine 648, and aspartate 649. The disordered stretch occupies residues 738–835; it reads FPTTTNTQQP…NNSNSNNQNQ (98 aa). The segment covering 740 to 835 has biased composition (low complexity); that stretch reads TTTNTQQPSS…NNSNSNNQNQ (96 aa). 7 N-linked (GlcNAc...) asparagine glycosylation sites follow: asparagine 769, asparagine 791, asparagine 795, asparagine 804, asparagine 809, asparagine 823, and asparagine 826. Aspartate 861 serves as a coordination point for a divalent metal cation. Residues asparagine 874, asparagine 944, asparagine 1018, and asparagine 1023 are each glycosylated (N-linked (GlcNAc...) asparagine). A compositionally biased stretch (low complexity) spans 978–1019; that stretch reads QQQQQQLHHHQQQQQFQHQQHQQQLQHQHQQQLNNQNQNQNQ. The disordered stretch occupies residues 978–1033; it reads QQQQQQLHHHQQQQQFQHQQHQQQLQHQHQQQLNNQNQNQNQSNSNNSNSFGLTQS. A compositionally biased stretch (polar residues) spans 1020 to 1033; the sequence is SNSNNSNSFGLTQS.

This sequence belongs to the cyclic nucleotide phosphodiesterase family. The cofactor is a divalent metal cation.

Its subcellular location is the cell membrane. The enzyme catalyses 3',5'-cyclic AMP + H2O = AMP + H(+). Its activity is regulated as follows. Inhibited by 3-isobutyl-1-methylxanthine (IBMX). Functionally, phosphodiesterase specific for extracellular cAMP. Involved in the degradation of extracellular cAMP specifically during multicellular development. This chain is 3',5'-cyclic-AMP phosphodiesterase 4 (Pde4), found in Dictyostelium discoideum (Social amoeba).